Reading from the N-terminus, the 103-residue chain is NADH-quinone oxidoreductase subunit K 1 (103 aa).

The next 3 membrane-spanning stretches (helical) occupy residues 6–26 (LGHF…GIFL), 32–52 (IIIL…LVAF), and 67–87 (LVLT…VVFF).

It belongs to the complex I subunit 4L family. In terms of assembly, NDH-1 is composed of 14 different subunits. Subunits NuoA, H, J, K, L, M, N constitute the membrane sector of the complex.

It localises to the cell inner membrane. The enzyme catalyses a quinone + NADH + 5 H(+)(in) = a quinol + NAD(+) + 4 H(+)(out). In terms of biological role, NDH-1 shuttles electrons from NADH, via FMN and iron-sulfur (Fe-S) centers, to quinones in the respiratory chain. The immediate electron acceptor for the enzyme in this species is believed to be ubiquinone. Couples the redox reaction to proton translocation (for every two electrons transferred, four hydrogen ions are translocated across the cytoplasmic membrane), and thus conserves the redox energy in a proton gradient. The sequence is that of NADH-quinone oxidoreductase subunit K 1 from Rhodopseudomonas palustris (strain ATCC BAA-98 / CGA009).